Consider the following 432-residue polypeptide: Adenylosuccinate synthetase (432 aa).

Residues 13–19 and 41–43 contribute to the GTP site; these read GDEGKGK and GHT. The active-site Proton acceptor is Asp-14. Asp-14 and Gly-41 together coordinate Mg(2+). Residues 14 to 17, 39 to 42, Thr-130, Arg-144, Gln-225, Thr-240, and Arg-304 each bind IMP; these read DEGK and NAGH. The Proton donor role is filled by His-42. 300-306 serves as a coordination point for substrate; sequence ATTGRKR. GTP is bound by residues Arg-306, 332–334, and 415–417; these read KLD and STG.

It belongs to the adenylosuccinate synthetase family. In terms of assembly, homodimer. Requires Mg(2+) as cofactor.

The protein localises to the cytoplasm. It catalyses the reaction IMP + L-aspartate + GTP = N(6)-(1,2-dicarboxyethyl)-AMP + GDP + phosphate + 2 H(+). The protein operates within purine metabolism; AMP biosynthesis via de novo pathway; AMP from IMP: step 1/2. Functionally, plays an important role in the de novo pathway of purine nucleotide biosynthesis. Catalyzes the first committed step in the biosynthesis of AMP from IMP. This chain is Adenylosuccinate synthetase, found in Photobacterium profundum (strain SS9).